Reading from the N-terminus, the 442-residue chain is Putative nucleotide-sugar transporter YMD8 (442 aa).

Residues 1 to 3 (MNR) are Cytoplasmic-facing. The chain crosses the membrane as a helical span at residues 4–24 (TVFLAFVFGWYFCSIALSIYN). Topologically, residues 25-32 (RWMFDPKD) are extracellular. A helical transmembrane segment spans residues 33–53 (GLGIGYPVLVTTFHQATLWLL). Topologically, residues 54 to 76 (SGIYIKLRHKPVKNVLRKNNGFN) are cytoplasmic. The helical transmembrane segment at 77-97 (WSFFLKFLLPTAVASAGDIGL) threads the bilayer. The Extracellular segment spans residues 98–107 (SNVSFQYVPL). A glycan (N-linked (GlcNAc...) asparagine) is linked at Asn99. A helical membrane pass occupies residues 108-128 (TIYTIIKSSSIAFVLLFGCIF). Over 129–132 (KLEK) the chain is Cytoplasmic. A helical membrane pass occupies residues 133 to 153 (FHWKLALSVIIMFVGVALMVF). Over 154–166 (KPSDSTSTKNDQA) the chain is Extracellular. A helical transmembrane segment spans residues 167-187 (LVIFGSFLVLASSCLSGLRWV). The Cytoplasmic segment spans residues 188–254 (YTQLMLRNNP…PIHTIHQLAP (67 aa)). Phosphoserine is present on Ser209. The helical transmembrane segment at 255-275 (IMGITLLLTSLLVEKPFPGIF) threads the bilayer. The Extracellular portion of the chain corresponds to 276–301 (SSSIFRLDTSNGGVGTETTVLSIVRG). The chain crosses the membrane as a helical span at residues 302–322 (IVLLILPGFAVFLLTICEFSI). Residues 323 to 329 (LEQTPVL) lie on the Cytoplasmic side of the membrane. The helical transmembrane segment at 330–350 (TVSIVGIVKELLTVIFGIIIL) threads the bilayer. Residues 351–355 (SERLS) lie on the Extracellular side of the membrane. Residues 356–376 (GFYNWLGMLIIMADVCYYNYF) traverse the membrane as a helical segment. Residues 377-442 (RYKQDLLQKY…QNVSRSSQQV (66 aa)) are Cytoplasmic-facing.

It belongs to the TPT transporter family. SLC35C subfamily.

Its subcellular location is the golgi apparatus membrane. The protein resides in the cytoplasmic vesicle. The protein localises to the COPI-coated vesicle membrane. The polypeptide is Putative nucleotide-sugar transporter YMD8 (YMD8) (Saccharomyces cerevisiae (strain ATCC 204508 / S288c) (Baker's yeast)).